The sequence spans 554 residues: (Z)-gamma-bisabolene synthase 2 (554 aa).

The Mg(2+) site is built by Asp-306, Asp-310, Asp-450, and Asp-458. Residues 306–310 carry the DDXXD motif motif; it reads DDACD.

This sequence belongs to the terpene synthase family. Tpsa subfamily. The cofactor is Mg(2+). It depends on Mn(2+) as a cofactor. As to expression, predominantly expressed in roots. Expressed in the cortex and the sub-epidermal layers of roots. Also detected in leaf hydathodes and flower stigmata.

It localises to the cytoplasm. It catalyses the reaction (2E,6E)-farnesyl diphosphate = (Z)-gamma-bisabolene + diphosphate. It participates in secondary metabolite biosynthesis; terpenoid biosynthesis. Its function is as follows. Involved in sesquiterpene (C15) biosynthesis. The major product is (Z)-gamma-bisabolene with minor amounts of (E)-nerolidol and alpha-bisabolol. The chain is (Z)-gamma-bisabolene synthase 2 (TPS13) from Arabidopsis thaliana (Mouse-ear cress).